A 523-amino-acid polypeptide reads, in one-letter code: Maturase K (523 aa).

It belongs to the intron maturase 2 family. MatK subfamily.

It is found in the plastid. Its subcellular location is the chloroplast. Functionally, usually encoded in the trnK tRNA gene intron. Probably assists in splicing its own and other chloroplast group II introns. This Asphodeline lutea (King's spear) protein is Maturase K.